A 500-amino-acid polypeptide reads, in one-letter code: Aspartyl/glutamyl-tRNA(Asn/Gln) amidotransferase subunit B (500 aa).

Belongs to the GatB/GatE family. GatB subfamily. As to quaternary structure, heterotrimer of A, B and C subunits.

It catalyses the reaction L-glutamyl-tRNA(Gln) + L-glutamine + ATP + H2O = L-glutaminyl-tRNA(Gln) + L-glutamate + ADP + phosphate + H(+). It carries out the reaction L-aspartyl-tRNA(Asn) + L-glutamine + ATP + H2O = L-asparaginyl-tRNA(Asn) + L-glutamate + ADP + phosphate + 2 H(+). Functionally, allows the formation of correctly charged Asn-tRNA(Asn) or Gln-tRNA(Gln) through the transamidation of misacylated Asp-tRNA(Asn) or Glu-tRNA(Gln) in organisms which lack either or both of asparaginyl-tRNA or glutaminyl-tRNA synthetases. The reaction takes place in the presence of glutamine and ATP through an activated phospho-Asp-tRNA(Asn) or phospho-Glu-tRNA(Gln). The chain is Aspartyl/glutamyl-tRNA(Asn/Gln) amidotransferase subunit B from Rhizobium leguminosarum bv. trifolii (strain WSM2304).